Reading from the N-terminus, the 250-residue chain is Transmembrane protein 106C (250 aa).

The interval 1-25 (MGSQHSAAARPSSCRRKQEDDRDGL) is disordered. Residue Gly2 is the site of N-myristoyl glycine attachment. The segment covering 16 to 25 (RKQEDDRDGL) has biased composition (basic and acidic residues). A helical membrane pass occupies residues 87 to 107 (YVLLSILLCLLASGLVVFFLF). Asn173 and Asn186 each carry an N-linked (GlcNAc...) asparagine glycan. The helical transmembrane segment at 197 to 217 (FSYVYFFCTVPEILVHNIVIF) threads the bilayer.

This sequence belongs to the TMEM106 family. As to quaternary structure, interacts with TMEM106B.

The protein resides in the endoplasmic reticulum membrane. It is found in the membrane. The polypeptide is Transmembrane protein 106C (TMEM106C) (Homo sapiens (Human)).